The primary structure comprises 248 residues: Triosephosphate isomerase (248 aa).

Position 4 is a phosphothreonine (Thr4). Substrate is bound by residues Asn10 and Lys12. Ser71 carries the post-translational modification Phosphoserine. His95 acts as the Electrophile in catalysis. Glu165 (proton acceptor) is an active-site residue. Ser215 carries the phosphoserine modification. Lys223 participates in a covalent cross-link: Glycyl lysine isopeptide (Lys-Gly) (interchain with G-Cter in ubiquitin).

This sequence belongs to the triosephosphate isomerase family. Homodimer.

The enzyme catalyses D-glyceraldehyde 3-phosphate = dihydroxyacetone phosphate. The protein operates within carbohydrate biosynthesis; gluconeogenesis. Its pathway is carbohydrate degradation; glycolysis; D-glyceraldehyde 3-phosphate from glycerone phosphate: step 1/1. The chain is Triosephosphate isomerase (TPI1) from Saccharomyces cerevisiae (strain ATCC 204508 / S288c) (Baker's yeast).